The following is a 200-amino-acid chain: Nucleoside triphosphate pyrophosphatase (200 aa).

The active-site Proton acceptor is Asp-79.

It belongs to the Maf family. A divalent metal cation is required as a cofactor.

The protein localises to the cytoplasm. The catalysed reaction is a ribonucleoside 5'-triphosphate + H2O = a ribonucleoside 5'-phosphate + diphosphate + H(+). The enzyme catalyses a 2'-deoxyribonucleoside 5'-triphosphate + H2O = a 2'-deoxyribonucleoside 5'-phosphate + diphosphate + H(+). In terms of biological role, nucleoside triphosphate pyrophosphatase. May have a dual role in cell division arrest and in preventing the incorporation of modified nucleotides into cellular nucleic acids. The chain is Nucleoside triphosphate pyrophosphatase from Legionella pneumophila (strain Corby).